Reading from the N-terminus, the 337-residue chain is Fructose-1,6-bisphosphatase class 1 (337 aa).

The Mg(2+) site is built by E94, D116, L118, and D119. Substrate is bound by residues 119-122 (DGSS), N210, and K276. Residue E282 coordinates Mg(2+).

This sequence belongs to the FBPase class 1 family. Homotetramer. The cofactor is Mg(2+).

The protein localises to the cytoplasm. The enzyme catalyses beta-D-fructose 1,6-bisphosphate + H2O = beta-D-fructose 6-phosphate + phosphate. Its pathway is carbohydrate biosynthesis; gluconeogenesis. This chain is Fructose-1,6-bisphosphatase class 1, found in Burkholderia vietnamiensis (strain G4 / LMG 22486) (Burkholderia cepacia (strain R1808)).